A 938-amino-acid chain; its full sequence is Isoleucine--tRNA ligase (938 aa).

The short motif at 58–68 is the 'HIGH' region element; it reads PYANGNIHIGH. Glu563 contacts L-isoleucyl-5'-AMP. Residues 604-608 carry the 'KMSKS' region motif; that stretch reads KMSKS. Lys607 lines the ATP pocket. Zn(2+) is bound by residues Cys903, Cys906, Cys921, and Cys924.

Belongs to the class-I aminoacyl-tRNA synthetase family. IleS type 1 subfamily. As to quaternary structure, monomer. The cofactor is Zn(2+).

Its subcellular location is the cytoplasm. The catalysed reaction is tRNA(Ile) + L-isoleucine + ATP = L-isoleucyl-tRNA(Ile) + AMP + diphosphate. In terms of biological role, catalyzes the attachment of isoleucine to tRNA(Ile). As IleRS can inadvertently accommodate and process structurally similar amino acids such as valine, to avoid such errors it has two additional distinct tRNA(Ile)-dependent editing activities. One activity is designated as 'pretransfer' editing and involves the hydrolysis of activated Val-AMP. The other activity is designated 'posttransfer' editing and involves deacylation of mischarged Val-tRNA(Ile). This is Isoleucine--tRNA ligase from Buchnera aphidicola subsp. Schizaphis graminum (strain Sg).